The chain runs to 438 residues: sn-glycerol-3-phosphate-binding periplasmic protein UgpB (438 aa).

The N-terminal stretch at 1–23 (MKPLRYTASALALGLALMANAQA) is a signal peptide. Sn-glycerol 3-phosphate is bound by residues tyrosine 65, glutamate 89, serine 144, serine 270, glycine 307, tyrosine 346, and arginine 397.

The protein belongs to the bacterial solute-binding protein 1 family. The complex is composed of two ATP-binding proteins (UgpC), two transmembrane proteins (UgpA and UgpE) and a solute-binding protein (UgpB).

The protein localises to the periplasm. Part of the ABC transporter complex UgpBAEC involved in sn-glycerol-3-phosphate (G3P) import. Binds G3P. The protein is sn-glycerol-3-phosphate-binding periplasmic protein UgpB (ugpB) of Escherichia coli O1:K1 / APEC.